Consider the following 272-residue polypeptide: uncharacterized protein (272 aa).

This is an uncharacterized protein from Sinorhizobium fredii (strain NBRC 101917 / NGR234).